The sequence spans 319 residues: Methionyl-tRNA formyltransferase (319 aa).

Residue 112 to 115 (SILP) coordinates (6S)-5,6,7,8-tetrahydrofolate.

It belongs to the Fmt family.

It carries out the reaction L-methionyl-tRNA(fMet) + (6R)-10-formyltetrahydrofolate = N-formyl-L-methionyl-tRNA(fMet) + (6S)-5,6,7,8-tetrahydrofolate + H(+). Attaches a formyl group to the free amino group of methionyl-tRNA(fMet). The formyl group appears to play a dual role in the initiator identity of N-formylmethionyl-tRNA by promoting its recognition by IF2 and preventing the misappropriation of this tRNA by the elongation apparatus. The polypeptide is Methionyl-tRNA formyltransferase (Shewanella denitrificans (strain OS217 / ATCC BAA-1090 / DSM 15013)).